Here is a 1132-residue protein sequence, read N- to C-terminus: APC membrane recruitment protein 1 (1132 aa).

M1 is subject to N-acetylmethionine. Residues 1–21 (MESQQDEAVQTKGASTSSDAQ) show a composition bias toward polar residues. 8 disordered regions span residues 1–256 (MESQ…ACKN), 268–301 (FMQPKPVLEGGSLEEPHTSETEGKVVAGEVNPPN), 338–423 (SMTD…GEEN), 469–505 (GLGELLTPQSDQQESAPNSDEGYYDSTTPGFEDDSGE), 674–699 (TSGGSQTSHRGTTSAFPATSSSEPDW), 736–770 (MQEANFGGSPRKAYPSYSPPEEPEEEEEEKEGNAT), 924–949 (ELQAHQEDSDEEGEEEEGEWGRDSPL), and 1038–1132 (SQAS…NLAK). Residues 24–35 (GAEKGAKNKTTE) are compositionally biased toward basic and acidic residues. The span at 121–133 (SKSSAQFPSSQSA) shows a compositional bias: low complexity. 3 stretches are compositionally biased toward basic and acidic residues: residues 195–208 (KELEGARTRSHEHV), 218–229 (EIFRDTRKENAK), and 281–290 (EEPHTSETEG). Acidic residues predominate over residues 372 to 423 (ALPDDDDNDDEEEEEEEEEEEEEEEEEEEEEEEEEEEELLEDEEEVKDGEEN). Composition is skewed to polar residues over residues 475-486 (TPQSDQQESAPN) and 677-696 (GSQTSHRGTTSAFPATSSSE). 2 stretches are compositionally biased toward acidic residues: residues 756–765 (EEPEEEEEEK) and 931–941 (DSDEEGEEEEG). Polar residues-rich tracts occupy residues 1059 to 1072 (SCSSISGANSQSQA) and 1115 to 1132 (ASLSTSYSSTAMNGNLAK).

This sequence belongs to the Amer family. In terms of assembly, interacts with CTNNB1, AXIN1, LRP6, KEAP1, APC and BTRC. Interacts with SCF (SKP1-CUL1-F-box protein) E3 ubiquitin-protein ligase complexes containing BTRC and/or FBXW11. Identified in the beta-catenin destruction complex containing CTNNB1, APC, AXIN1 and AXIN2. Interacts with WT1. Expressed in kidney.

The protein localises to the cytoplasm. It localises to the cell membrane. It is found in the nucleus. In terms of biological role, regulator of the canonical Wnt signaling pathway. Acts by specifically binding phosphatidylinositol 4,5-bisphosphate (PtdIns(4,5)P2), translocating to the cell membrane and interacting with key regulators of the canonical Wnt signaling pathway, such as components of the beta-catenin destruction complex. Acts both as a positive and negative regulator of the Wnt signaling pathway, depending on the context: acts as a positive regulator by promoting LRP6 phosphorylation. Also acts as a negative regulator by acting as a scaffold protein for the beta-catenin destruction complex and promoting stabilization of Axin at the cell membrane. Promotes CTNNB1 ubiquitination and degradation. Involved in kidney development. The protein is APC membrane recruitment protein 1 (Amer1) of Mus musculus (Mouse).